The chain runs to 461 residues: Putative transcription initiation factor IIB-like protein (461 aa).

The disordered stretch occupies residues 113 to 142 (SESLENIQSENSENNDNFTDNNTKKSPTKS). The span at 121-137 (SENSENNDNFTDNNTKK) shows a compositional bias: low complexity. Residues 141 to 173 (KSRICSGCGSKGTLLEDQSSSVLVCSECGMIND) form a TFIIB-type zinc finger. Cysteine 145, cysteine 165, and cysteine 168 together coordinate Zn(2+). 2 consecutive repeat copies span residues 246-327 (ISTI…EKKV) and 360-430 (IRRH…DVTI).

The protein belongs to the TFIIB family.

The polypeptide is Putative transcription initiation factor IIB-like protein (Acanthamoeba polyphaga mimivirus (APMV)).